Here is a 98-residue protein sequence, read N- to C-terminus: NADH-ubiquinone oxidoreductase chain 4L (98 aa).

Helical transmembrane passes span 1-21 (MPYI…GTLM), 29-49 (SLLC…LLSL), and 61-81 (LILL…LVMI).

Belongs to the complex I subunit 4L family. As to quaternary structure, core subunit of respiratory chain NADH dehydrogenase (Complex I) which is composed of 45 different subunits.

It is found in the mitochondrion inner membrane. The enzyme catalyses a ubiquinone + NADH + 5 H(+)(in) = a ubiquinol + NAD(+) + 4 H(+)(out). Core subunit of the mitochondrial membrane respiratory chain NADH dehydrogenase (Complex I) which catalyzes electron transfer from NADH through the respiratory chain, using ubiquinone as an electron acceptor. Part of the enzyme membrane arm which is embedded in the lipid bilayer and involved in proton translocation. In Elephas maximus (Indian elephant), this protein is NADH-ubiquinone oxidoreductase chain 4L (MT-ND4L).